The primary structure comprises 207 residues: 3-demethoxyubiquinol 3-hydroxylase (207 aa).

Fe cation contacts are provided by Glu-56, Glu-86, His-89, Glu-138, Glu-170, and His-173.

Belongs to the COQ7 family. Fe cation serves as cofactor.

It localises to the cell membrane. It carries out the reaction a 5-methoxy-2-methyl-3-(all-trans-polyprenyl)benzene-1,4-diol + AH2 + O2 = a 3-demethylubiquinol + A + H2O. It functions in the pathway cofactor biosynthesis; ubiquinone biosynthesis. In terms of biological role, catalyzes the hydroxylation of 2-nonaprenyl-3-methyl-6-methoxy-1,4-benzoquinol during ubiquinone biosynthesis. The protein is 3-demethoxyubiquinol 3-hydroxylase of Cupriavidus pinatubonensis (strain JMP 134 / LMG 1197) (Cupriavidus necator (strain JMP 134)).